Reading from the N-terminus, the 145-residue chain is MLEPKDTKHRKVQRNQGLKRNKYAVKGTRLSFGDYGLKSLEEGEVNSRQLEAARVAINRYLKRDGKVWIRVFPDKPKTKTPAETRMGKGKGEPEHFVAPVQPGNVIFEVGGGADEESAREALRLGKHKLPLKTKFVVRPGSRAEE.

Over residues 76 to 95 (PKTKTPAETRMGKGKGEPEH) the composition is skewed to basic and acidic residues. Residues 76–97 (PKTKTPAETRMGKGKGEPEHFV) are disordered.

It belongs to the universal ribosomal protein uL16 family. As to quaternary structure, part of the 50S ribosomal subunit.

Its function is as follows. Binds 23S rRNA and is also seen to make contacts with the A and possibly P site tRNAs. This chain is Large ribosomal subunit protein uL16, found in Salinibacter ruber (strain DSM 13855 / M31).